The primary structure comprises 85 residues: MSSGGLLLLLGLLTLCAELTPVSSRKRHPDCDKPPDTKICQTVVRAFYYKPSAKRCVQFRYGGCNGNGNHFKSDHLCRCECLEYS.

The first 24 residues, Met-1–Ser-24, serve as a signal peptide directing secretion. A BPTI/Kunitz inhibitor domain is found at Cys-31 to Cys-81. 3 cysteine pairs are disulfide-bonded: Cys-31–Cys-81, Cys-40–Cys-64, and Cys-56–Cys-77.

It belongs to the venom Kunitz-type family. Heterodimer; disulfide-linked. The A chains have phospholipase A2 activity and the B chains show homology with the basic protease inhibitors. In terms of tissue distribution, expressed by the venom gland.

The protein resides in the secreted. Functionally, beta-bungarotoxins are presynaptic neurotoxins of the venom. The B chain is homologous to venom basic protease inhibitors but has no protease inhibitor activity and blocks voltage-gated potassium channels (Kv). The polypeptide is Kunitz-type serine protease inhibitor homolog beta-bungarotoxin B4 chain (Bungarus multicinctus (Many-banded krait)).